Consider the following 494-residue polypeptide: Ribosomal lysine N-methyltransferase 4 (494 aa).

One can recognise an SET domain in the interval 25-265; sequence PKIEIKDLCC…KNEQVYNIYG (241 aa). Tyr-264 contacts S-adenosyl-L-methionine.

The protein belongs to the class V-like SAM-binding methyltransferase superfamily. Histone-lysine methyltransferase family. SETD6 subfamily.

It is found in the nucleus. In terms of biological role, S-adenosyl-L-methionine-dependent protein-lysine N-methyltransferase that monomethylates 60S ribosomal protein L42 (RPL42A and RPL42B) at 'Lys-55'. This Saccharomyces cerevisiae (strain ATCC 204508 / S288c) (Baker's yeast) protein is Ribosomal lysine N-methyltransferase 4.